Consider the following 92-residue polypeptide: Small ribosomal subunit protein bS16 (92 aa).

This sequence belongs to the bacterial ribosomal protein bS16 family.

In Staphylococcus carnosus (strain TM300), this protein is Small ribosomal subunit protein bS16.